The chain runs to 193 residues: Transcriptional regulator RamR (193 aa).

In terms of domain architecture, HTH tetR-type spans E7–L66. Positions S29 to F48 form a DNA-binding region, H-T-H motif.

As to quaternary structure, homodimer. May bind DNA either as a homodimer or as a pair of homodimers. Various chemicals reduce DNA-binding in vitro, including bile acids, such as cholic and chenodeoxycholic acids, and antimicrobial drugs, such as berberine, crystal violet, dequalinium, ethidium bromide and rhodamine 6G. Binds small regulatory RNA StyR3.

Transcriptional regulator. Represses the transcription of the transcriptional activator RamA and, thereby, leads to repression of the expression of the efflux pump subunits AcrA and AcrB, and TolC. Acts by binding directly to the promoter region of the ramA gene. Promoter binding may be inhibited partially by the small regulatory RNA StyR3, perhaps thereby ensuring a basal level of expression of RamA. The polypeptide is Transcriptional regulator RamR (Salmonella typhimurium (strain LT2 / SGSC1412 / ATCC 700720)).